The chain runs to 701 residues: Elongation factor G (701 aa).

Residues 6–285 form the tr-type G domain; it reads HKVRNIGIMA…AVVAYLPNPL (280 aa). Residues 15–22, 79–83, and 133–136 contribute to the GTP site; these read AHIDAGKT, DNPGH, and NKMD.

It belongs to the TRAFAC class translation factor GTPase superfamily. Classic translation factor GTPase family. EF-G/EF-2 subfamily.

It is found in the cytoplasm. In terms of biological role, catalyzes the GTP-dependent ribosomal translocation step during translation elongation. During this step, the ribosome changes from the pre-translocational (PRE) to the post-translocational (POST) state as the newly formed A-site-bound peptidyl-tRNA and P-site-bound deacylated tRNA move to the P and E sites, respectively. Catalyzes the coordinated movement of the two tRNA molecules, the mRNA and conformational changes in the ribosome. The chain is Elongation factor G (fusA) from Micrococcus luteus (Micrococcus lysodeikticus).